The chain runs to 393 residues: Sugar efflux transporter B (393 aa).

12 consecutive transmembrane segments (helical) span residues 13-33, 51-71, 82-102, 106-126, 152-172, 174-194, 219-239, 253-273, 283-303, 306-326, 344-364, and 366-386; these read FDLTSTAFLIVAFLTGIAGAL, AMVGFFFTGSAVIGILVSQFL, KSLIVFCCLLGVLACTLFAWN, FVLLFVGVFLSSFGSTANPQM, VSLAWVIGPPLAYALAMGFSF, VMYLSAAVAFIVCGVMVWLFL, LLLFVICTLMWGSNSLYIINM, LAGVMMGTAAGLEIPTMLIAG, FLMRVAAVGGVCFYAGMLMAH, VILLGLQLLNAIFIGILGGIG, LYTNTSRVGWIIAGSVAGIVA, and IWNYHAVFWFAMVMIIATLFC.

Belongs to the major facilitator superfamily. Set transporter family.

It is found in the cell inner membrane. Functionally, involved in the efflux of sugars. The physiological role may be the detoxification of non-metabolizable sugar analogs. Can transport lactose and glucose. This is Sugar efflux transporter B (setB) from Escherichia coli (strain K12).